The chain runs to 340 residues: GTP 3',8-cyclase (340 aa).

Residues 20–246 (RFERQYVYLR…PKALSDGPAK (227 aa)) enclose the Radical SAM core domain. Arg-29 contributes to the GTP binding site. The [4Fe-4S] cluster site is built by Cys-36 and Cys-40. Position 42 (Tyr-42) interacts with S-adenosyl-L-methionine. Cys-43 is a binding site for [4Fe-4S] cluster. Arg-79 contacts GTP. Residue Gly-83 participates in S-adenosyl-L-methionine binding. Thr-110 is a GTP binding site. Ser-134 contacts S-adenosyl-L-methionine. A GTP-binding site is contributed by Lys-171. Met-205 contributes to the S-adenosyl-L-methionine binding site. Positions 268 and 271 each coordinate [4Fe-4S] cluster. 273–275 (RLR) is a GTP binding site. Residue Cys-285 participates in [4Fe-4S] cluster binding.

The protein belongs to the radical SAM superfamily. MoaA family. As to quaternary structure, monomer and homodimer. Requires [4Fe-4S] cluster as cofactor.

The catalysed reaction is GTP + AH2 + S-adenosyl-L-methionine = (8S)-3',8-cyclo-7,8-dihydroguanosine 5'-triphosphate + 5'-deoxyadenosine + L-methionine + A + H(+). It functions in the pathway cofactor biosynthesis; molybdopterin biosynthesis. Its function is as follows. Catalyzes the cyclization of GTP to (8S)-3',8-cyclo-7,8-dihydroguanosine 5'-triphosphate. This Actinobacillus pleuropneumoniae serotype 5b (strain L20) protein is GTP 3',8-cyclase.